The primary structure comprises 610 residues: UvrABC system protein C (610 aa).

Positions serine 16 to valine 94 constitute a GIY-YIG domain. The UVR domain occupies glutamine 204–valine 239.

This sequence belongs to the UvrC family. In terms of assembly, interacts with UvrB in an incision complex.

Its subcellular location is the cytoplasm. The UvrABC repair system catalyzes the recognition and processing of DNA lesions. UvrC both incises the 5' and 3' sides of the lesion. The N-terminal half is responsible for the 3' incision and the C-terminal half is responsible for the 5' incision. The sequence is that of UvrABC system protein C from Pectobacterium atrosepticum (strain SCRI 1043 / ATCC BAA-672) (Erwinia carotovora subsp. atroseptica).